The chain runs to 311 residues: Lipoyl synthase (311 aa).

Positions 47, 52, 58, 73, 77, 80, and 286 each coordinate [4Fe-4S] cluster. The Radical SAM core domain occupies 59–276 (WSRHTATYLA…RSVGESLGLF (218 aa)).

It belongs to the radical SAM superfamily. Lipoyl synthase family. The cofactor is [4Fe-4S] cluster.

The protein localises to the cytoplasm. The enzyme catalyses [[Fe-S] cluster scaffold protein carrying a second [4Fe-4S](2+) cluster] + N(6)-octanoyl-L-lysyl-[protein] + 2 oxidized [2Fe-2S]-[ferredoxin] + 2 S-adenosyl-L-methionine + 4 H(+) = [[Fe-S] cluster scaffold protein] + N(6)-[(R)-dihydrolipoyl]-L-lysyl-[protein] + 4 Fe(3+) + 2 hydrogen sulfide + 2 5'-deoxyadenosine + 2 L-methionine + 2 reduced [2Fe-2S]-[ferredoxin]. It participates in protein modification; protein lipoylation via endogenous pathway; protein N(6)-(lipoyl)lysine from octanoyl-[acyl-carrier-protein]: step 2/2. Functionally, catalyzes the radical-mediated insertion of two sulfur atoms into the C-6 and C-8 positions of the octanoyl moiety bound to the lipoyl domains of lipoate-dependent enzymes, thereby converting the octanoylated domains into lipoylated derivatives. The sequence is that of Lipoyl synthase from Chlamydia trachomatis serovar L2 (strain ATCC VR-902B / DSM 19102 / 434/Bu).